The following is a 207-amino-acid chain: Large ribosomal subunit protein uL4 (207 aa).

The disordered stretch occupies residues 48-70; it reads KAQKTRSEVSGGGAKPWRQKGTG.

It belongs to the universal ribosomal protein uL4 family. As to quaternary structure, part of the 50S ribosomal subunit.

Its function is as follows. One of the primary rRNA binding proteins, this protein initially binds near the 5'-end of the 23S rRNA. It is important during the early stages of 50S assembly. It makes multiple contacts with different domains of the 23S rRNA in the assembled 50S subunit and ribosome. Functionally, forms part of the polypeptide exit tunnel. This chain is Large ribosomal subunit protein uL4, found in Francisella tularensis subsp. holarctica (strain FTNF002-00 / FTA).